Reading from the N-terminus, the 245-residue chain is 3-deoxy-manno-octulosonate cytidylyltransferase (245 aa).

The protein belongs to the KdsB family.

The protein resides in the cytoplasm. The catalysed reaction is 3-deoxy-alpha-D-manno-oct-2-ulosonate + CTP = CMP-3-deoxy-beta-D-manno-octulosonate + diphosphate. It participates in nucleotide-sugar biosynthesis; CMP-3-deoxy-D-manno-octulosonate biosynthesis; CMP-3-deoxy-D-manno-octulosonate from 3-deoxy-D-manno-octulosonate and CTP: step 1/1. It functions in the pathway bacterial outer membrane biogenesis; lipopolysaccharide biosynthesis. Functionally, activates KDO (a required 8-carbon sugar) for incorporation into bacterial lipopolysaccharide in Gram-negative bacteria. The protein is 3-deoxy-manno-octulosonate cytidylyltransferase of Acaryochloris marina (strain MBIC 11017).